A 447-amino-acid polypeptide reads, in one-letter code: Methionine aminopeptidase 2-2 (447 aa).

The disordered stretch occupies residues 1 to 89 (MAAQTAPELA…PRIPLTTLFP (89 aa)). The segment covering 15-30 (NKNSGSAEANVVSNGG) has biased composition (polar residues). The segment covering 34 to 47 (DDAENEGDSDDDKD) has biased composition (acidic residues). Residues 59 to 73 (KKKKKKRSKKKKKAA) are compositionally biased toward basic residues. Histidine 197 is a substrate binding site. A divalent metal cation contacts are provided by aspartate 217, aspartate 228, and histidine 297. Histidine 305 contacts substrate. Positions 333 and 428 each coordinate a divalent metal cation.

This sequence belongs to the peptidase M24A family. Methionine aminopeptidase eukaryotic type 2 subfamily. Co(2+) is required as a cofactor. Zn(2+) serves as cofactor. Requires Mn(2+) as cofactor. The cofactor is Fe(2+).

It localises to the cytoplasm. It carries out the reaction Release of N-terminal amino acids, preferentially methionine, from peptides and arylamides.. In terms of biological role, cotranslationally removes the N-terminal methionine from nascent proteins. The N-terminal methionine is often cleaved when the second residue in the primary sequence is small and uncharged (Met-Ala-, Cys, Gly, Pro, Ser, Thr, or Val). The protein is Methionine aminopeptidase 2-2 of Arthroderma otae (strain ATCC MYA-4605 / CBS 113480) (Microsporum canis).